The chain runs to 122 residues: Glycine cleavage system H protein (122 aa).

One can recognise a Lipoyl-binding domain in the interval 19-101 (VATVGITDYA…QGKAWFFKIK (83 aa)). Residue Lys60 is modified to N6-lipoyllysine.

It belongs to the GcvH family. The glycine cleavage system is composed of four proteins: P, T, L and H. The cofactor is (R)-lipoate.

The glycine cleavage system catalyzes the degradation of glycine. The H protein shuttles the methylamine group of glycine from the P protein to the T protein. This chain is Glycine cleavage system H protein, found in Bradyrhizobium diazoefficiens (strain JCM 10833 / BCRC 13528 / IAM 13628 / NBRC 14792 / USDA 110).